The following is a 430-amino-acid chain: tRNA(Ile)-lysidine synthase (430 aa).

Position 21 to 26 (21 to 26 (SGGLDS)) interacts with ATP.

The protein belongs to the tRNA(Ile)-lysidine synthase family.

The protein localises to the cytoplasm. It carries out the reaction cytidine(34) in tRNA(Ile2) + L-lysine + ATP = lysidine(34) in tRNA(Ile2) + AMP + diphosphate + H(+). Ligates lysine onto the cytidine present at position 34 of the AUA codon-specific tRNA(Ile) that contains the anticodon CAU, in an ATP-dependent manner. Cytidine is converted to lysidine, thus changing the amino acid specificity of the tRNA from methionine to isoleucine. This chain is tRNA(Ile)-lysidine synthase, found in Salmonella heidelberg (strain SL476).